Reading from the N-terminus, the 328-residue chain is MSTQGFLKPRSIEVEPVGTHHAKIVMEPFERGYGHTLGNALRRILLSSMTGYAPTEVQMTGVVHEYSTIPGVREDVVDILLNLKGVVFKLHNRDEVTLVLRKNGAGTVVASDIELPHDVEIINPDHLICNLTEAGKVEMQIKVEKGRGYVPGNVRALSEDRTHTIGRIVLDASFSPVRRVSYAVESARVEQRTDLDKLVLDIETNGVISPEEAVRQSARILMDQISVFAALEGAGDSYEAPVRGTPQIDPVLLRPVDDLELTVRSANCLKAENIYYIGDLIQRTENELLKTPNLGRKSLNEIKEVLAARGLTLGMKLENWPPLGLERP.

An alpha N-terminal domain (alpha-NTD) region spans residues 1-232; the sequence is MSTQGFLKPR…DQISVFAALE (232 aa). The interval 248–328 is alpha C-terminal domain (alpha-CTD); sequence IDPVLLRPVD…NWPPLGLERP (81 aa).

This sequence belongs to the RNA polymerase alpha chain family. Homodimer. The RNAP catalytic core consists of 2 alpha, 1 beta, 1 beta' and 1 omega subunit. When a sigma factor is associated with the core the holoenzyme is formed, which can initiate transcription.

It carries out the reaction RNA(n) + a ribonucleoside 5'-triphosphate = RNA(n+1) + diphosphate. In terms of biological role, DNA-dependent RNA polymerase catalyzes the transcription of DNA into RNA using the four ribonucleoside triphosphates as substrates. This Bordetella petrii (strain ATCC BAA-461 / DSM 12804 / CCUG 43448) protein is DNA-directed RNA polymerase subunit alpha.